A 199-amino-acid polypeptide reads, in one-letter code: Early activation antigen CD69 (199 aa).

A disordered region spans residues methionine 1–phenylalanine 29. The Cytoplasmic portion of the chain corresponds to methionine 1–proline 40. The chain crosses the membrane as a helical; Signal-anchor for type II membrane protein span at residues valine 41–leucine 61. Over serine 62–lysine 199 the chain is Extracellular. 3 cysteine pairs are disulfide-bonded: cysteine 85–cysteine 96, cysteine 113–cysteine 194, and cysteine 173–cysteine 186. In terms of domain architecture, C-type lectin spans tyrosine 92 to asparagine 195. Residue asparagine 166 is glycosylated (N-linked (GlcNAc...) asparagine).

Homodimer; disulfide-linked. Interacts with S100A8 and S100A9. Interacts with galactin-1/LGALS1. Interacts with S1PR1; this interaction mediates S1PR1 degradation. In terms of processing, constitutive Ser/Thr phosphorylation in both mature thymocytes and activated T-lymphocytes. In terms of tissue distribution, expressed on the surface of activated T-cells, B-cells, natural killer cells, neutrophils, eosinophils, epidermal Langerhans cells and platelets.

The protein resides in the cell membrane. In terms of biological role, transmembrane protein expressed mainly on T-cells resident in mucosa that plays an essential role in immune cell homeostasis. Rapidly expressed on the surface of platelets, T-lymphocytes and NK cells upon activation by various stimuli, such as antigen recognition or cytokine signaling, stimulates different signaling pathways in different cell types. Negatively regulates Th17 cell differentiation through its carbohydrate dependent interaction with galectin-1/LGALS1 present on immature dendritic cells. Association of CD69 cytoplasmic tail with the JAK3/STAT5 signaling pathway regulates the transcription of RORgamma/RORC and, consequently, differentiation toward the Th17 lineage. Also acts via the S100A8/S100A9 complex present on peripheral blood mononuclear cells to promote the conversion of naive CD4 T-cells into regulatory T-cells. Acts as an oxidized low-density lipoprotein (oxLDL) receptor in CD4 T-lymphocytes and negatively regulates the inflammatory response by inducing the expression of PDCD1 through the activation of NFAT. Participates in adipose tissue-derived mesenchymal stem cells (ASCs)-mediated protection against P.aeruginosa infection. Mechanistically, specifically recognizes P.aeruginosa to promote ERK1 activation, followed by granulocyte-macrophage colony-stimulating factor (GM-CSF) and other inflammatory cytokines secretion. In eosinophils, induces IL-10 production through the ERK1/2 pathway. Negatively regulates the chemotactic responses of effector lymphocytes and dendritic cells (DCs) to sphingosine 1 phosphate/S1P by acting as a S1PR1 receptor agonist and facilitating the internalization and degradation of the receptor. The protein is Early activation antigen CD69 (CD69) of Homo sapiens (Human).